A 466-amino-acid polypeptide reads, in one-letter code: Putative D-3-phosphoglycerate dehydrogenase (466 aa).

The segment covering 1–15 (MDIKGGRRGNVEDSL) has biased composition (basic and acidic residues). Residues 1-26 (MDIKGGRRGNVEDSLNKLSLSPPDNN) form a disordered region. Residues 16–26 (NKLSLSPPDNN) show a composition bias toward polar residues. A Phosphoserine modification is found at serine 87. Residues 205–206 (HI) and aspartate 225 contribute to the NAD(+) site. Serine 258 is subject to Phosphoserine. NAD(+) contacts are provided by residues 282 to 284 (ASR) and aspartate 308. Residue arginine 284 is part of the active site. Glutamate 313 is an active-site residue. Histidine 344 acts as the Proton donor in catalysis. Position 344 to 347 (344 to 347 (HIGG)) interacts with NAD(+). One can recognise an ACT domain in the interval 396 to 466 (RVLFVHRNVP…PCKINTRLLY (71 aa)).

The protein belongs to the D-isomer specific 2-hydroxyacid dehydrogenase family.

The enzyme catalyses (2R)-3-phosphoglycerate + NAD(+) = 3-phosphooxypyruvate + NADH + H(+). It catalyses the reaction (R)-2-hydroxyglutarate + NAD(+) = 2-oxoglutarate + NADH + H(+). The protein operates within amino-acid biosynthesis; L-serine biosynthesis; L-serine from 3-phospho-D-glycerate: step 1/3. Functionally, catalyzes the reversible oxidation of 3-phospho-D-glycerate to 3-phosphonooxypyruvate, the first step of the phosphorylated L-serine biosynthesis pathway. Also catalyzes the reversible oxidation of 2-hydroxyglutarate to 2-oxoglutarate. This Schizosaccharomyces pombe (strain 972 / ATCC 24843) (Fission yeast) protein is Putative D-3-phosphoglycerate dehydrogenase.